Here is a 344-residue protein sequence, read N- to C-terminus: Fructose-1,6-bisphosphatase, cytosolic (344 aa).

Glutamate 71, glutamate 100, aspartate 121, leucine 123, and aspartate 124 together coordinate Mg(2+). Substrate is bound by residues 124-127 (DGSS), asparagine 215, tyrosine 247, tyrosine 267, and lysine 277. Glutamate 283 is a binding site for Mg(2+).

The protein belongs to the FBPase class 1 family. The cofactor is Mg(2+).

The protein resides in the cytoplasm. It carries out the reaction beta-D-fructose 1,6-bisphosphate + H2O = beta-D-fructose 6-phosphate + phosphate. The polypeptide is Fructose-1,6-bisphosphatase, cytosolic (Oryza coarctata (Wild rice)).